A 498-amino-acid polypeptide reads, in one-letter code: ATP synthase subunit beta, chloroplastic (498 aa).

172 to 179 contributes to the ATP binding site; it reads GGAGVGKT.

The protein belongs to the ATPase alpha/beta chains family. F-type ATPases have 2 components, CF(1) - the catalytic core - and CF(0) - the membrane proton channel. CF(1) has five subunits: alpha(3), beta(3), gamma(1), delta(1), epsilon(1). CF(0) has four main subunits: a(1), b(1), b'(1) and c(9-12).

It is found in the plastid. Its subcellular location is the chloroplast thylakoid membrane. The catalysed reaction is ATP + H2O + 4 H(+)(in) = ADP + phosphate + 5 H(+)(out). Its function is as follows. Produces ATP from ADP in the presence of a proton gradient across the membrane. The catalytic sites are hosted primarily by the beta subunits. The sequence is that of ATP synthase subunit beta, chloroplastic from Nandina domestica (Heavenly bamboo).